The sequence spans 130 residues: MAKPSKTTTKKKVKKTVVDGIAHIHASFNNTIVTITDRQGNTLSWATAGGSGFRGSRKSTPFAAQVAAERAGQAAQEYGLKNLDVEVKGPGPGRESAVRALNNVGYKITNITDVTPIPHNGCRPPKKRRV.

It belongs to the universal ribosomal protein uS11 family. Part of the 30S ribosomal subunit. Interacts with proteins S7 and S18. Binds to IF-3.

Functionally, located on the platform of the 30S subunit, it bridges several disparate RNA helices of the 16S rRNA. Forms part of the Shine-Dalgarno cleft in the 70S ribosome. The polypeptide is Small ribosomal subunit protein uS11 (Teredinibacter turnerae (strain ATCC 39867 / T7901)).